We begin with the raw amino-acid sequence, 430 residues long: Enolase (430 aa).

(2R)-2-phosphoglycerate is bound at residue Gln-163. The active-site Proton donor is the Glu-205. 3 residues coordinate Mg(2+): Asp-242, Glu-285, and Asp-312. Residues Lys-337, Arg-366, Ser-367, and Lys-388 each contribute to the (2R)-2-phosphoglycerate site. The Proton acceptor role is filled by Lys-337.

The protein belongs to the enolase family. It depends on Mg(2+) as a cofactor.

It is found in the cytoplasm. The protein localises to the secreted. The protein resides in the cell surface. The enzyme catalyses (2R)-2-phosphoglycerate = phosphoenolpyruvate + H2O. Its pathway is carbohydrate degradation; glycolysis; pyruvate from D-glyceraldehyde 3-phosphate: step 4/5. Its function is as follows. Catalyzes the reversible conversion of 2-phosphoglycerate (2-PG) into phosphoenolpyruvate (PEP). It is essential for the degradation of carbohydrates via glycolysis. This Rhodopseudomonas palustris (strain BisB18) protein is Enolase.